The sequence spans 1985 residues: Histone-lysine N-methyltransferase SETD1B (1985 aa).

Over residues 1–11 the composition is skewed to basic residues; the sequence is MENSHPHHHHQ. Residues 1–25 form a disordered region; sequence MENSHPHHHHQQPPPQPGPSGERRN. The interaction with WDR82 stretch occupies residues 67–97; the sequence is VEDPRVVGIWTKNKELELSVPKFKIDEFYVG. The RRM domain maps to 92-180; the sequence is DEFYVGPVPP…NIIHVELDTK (89 aa). Disordered stretches follow at residues 234–304, 353–710, 955–1480, 1519–1624, and 1658–1687; these read GCGS…QDPT, GSSG…PPPA, VKRK…RTGP, QLPP…STKL, and RGPWRRPPKKRHEDLVAPSASPEPSPPQPL. 4 stretches are compositionally biased toward polar residues: residues 242–258, 264–273, 281–304, and 353–365; these read VTPNSGGTPFSQDTAYS, TPNSYGQGTP, PFSQDSSYSSRQPTPSYLFSQDPT, and GSSGTPFKAQSQD. A compositionally biased stretch (low complexity) spans 366-381; that stretch reads ATTFAHTPPPAQTATA. 3 stretches are compositionally biased toward pro residues: residues 393 to 404, 423 to 433, and 440 to 449; these read TPAPPFPPPPEE, PAPPPLPPAEP, and GTPPGPPPPD. Positions 484–512 are enriched in basic and acidic residues; it reads EKPHDSLDSRIEMLLKEQRTKLPFLREQD. A compositionally biased stretch (low complexity) spans 522-535; the sequence is SPISSSSSQLSPLS. Pro residues predominate over residues 583–594; the sequence is PRPPPEPGPPDP. Positions 628–637 are enriched in acidic residues; that stretch reads EDMEISDDEM. Residues 650–669 show a composition bias toward low complexity; that stretch reads PMVVTPGAGAVAAPNVLAPN. Residues 670 to 710 show a composition bias toward pro residues; the sequence is LPLPPPPGFPPLPPPPPPPPPQPGFPMPPPLPPPPPPPPPA. Phosphoserine occurs at positions 977 and 985. Positions 986–1006 are enriched in basic and acidic residues; sequence ERERDRDIADAPCELTKRDPK. Ser-1022 is subject to Phosphoserine. A compositionally biased stretch (low complexity) spans 1032-1055; it reads LSASSSSSASSSSGSSTTSPSSSA. The segment covering 1058–1083 has biased composition (acidic residues); sequence KEEEDRESTEEEEEEEEEEAEEEEEE. Residues 1087 to 1097 show a composition bias toward low complexity; sequence SRISSPSSSSS. Residues 1100–1120 show a composition bias toward acidic residues; the sequence is KDDEDDNEADSDGQIDSDIDD. Positions 1143–1178 are enriched in low complexity; the sequence is SITTSKAPAESSSSSSESSGSSEFESSSESESSSSS. Residues 1179 to 1202 show a composition bias toward acidic residues; sequence SEDEEEMTVPGVEEEEEEEEEEEK. Residues 1205–1217 show a composition bias toward low complexity; sequence AMAAATVVAMAEE. Over residues 1247–1261 the composition is skewed to acidic residues; it reads GTEEEVDIEAEDEVP. Phosphoserine is present on residues Ser-1283, Ser-1301, and Ser-1354. Pro residues predominate over residues 1331 to 1373; sequence EPPPMLSLPLQPPLPPPRLLRPPSPPPEPETPEPPKPPVPLEP. The span at 1402–1442 shows a compositional bias: low complexity; that stretch reads PGGEPPLSGSSSGLSLSSPQVPGSPFSYPSPSPGLSSGGLP. Residues 1535-1544 show a composition bias toward basic residues; it reads IKRKPGRPRR. 2 stretches are compositionally biased toward pro residues: residues 1600–1619 and 1678–1687; these read PAPPPPLPPQPPPPPPPPPV and SPEPSPPQPL. 2 positions are modified to phosphoserine: Ser-1678 and Ser-1682. The WDR5 interaction motif (WIN) signature appears at 1764 to 1769; it reads GCARSE. Residues 1786 to 1819 form a disordered region; sequence SRASTDEPPMDTQGMSIPAQPHASTRAGSERRSE. A RxxxRR motif motif is present at residues 1817–1822; it reads RSEQRR. An SET domain is found at 1846-1963; it reads KKLKFCKSHI…VNEEITYDYK (118 aa). Tyr-1962 provides a ligand contact to S-adenosyl-L-methionine. A Post-SET domain is found at 1969 to 1985; the sequence is VKIPCLCGSENCRGTLN.

It belongs to the class V-like SAM-binding methyltransferase superfamily. In terms of assembly, component of the SET1B/COMPASS complex composed of the catalytic subunit SETD1B, WDR5, WDR82, RBBP5, ASH2L/ASH2, CXXC1/CFP1, HCFC1, DPY30 homotrimer and BOD1. Forms a core complex with the evolutionary conserved subcomplex WRAD composed of WDR5, RBBP5, ASH2L/ASH2 and DPY30 subunits; WRAD differentially stimulates the methyltransferase activity. Interacts with HCFC1 and ASH2L/ASH2. Interacts (via the RRM domain) with WDR82. Interacts (via the RRM domain) with hyperphosphorylated C-terminal domain (CTD) of RNA polymerase II large subunit (POLR2A) only in the presence of WDR82. Binds specifically to CTD heptad repeats phosphorylated on 'Ser-5' of each heptad. Interacts with RBM15. Interacts (via WIN motif) with WDR5. As to expression, widely expressed.

The protein resides in the nucleus. Its subcellular location is the nucleus speckle. The protein localises to the chromosome. It is found in the cytoplasm. It catalyses the reaction L-lysyl(4)-[histone H3] + S-adenosyl-L-methionine = N(6)-methyl-L-lysyl(4)-[histone H3] + S-adenosyl-L-homocysteine + H(+). The enzyme catalyses N(6)-methyl-L-lysyl(4)-[histone H3] + S-adenosyl-L-methionine = N(6),N(6)-dimethyl-L-lysyl(4)-[histone H3] + S-adenosyl-L-homocysteine + H(+). It carries out the reaction N(6),N(6)-dimethyl-L-lysyl(4)-[histone H3] + S-adenosyl-L-methionine = N(6),N(6),N(6)-trimethyl-L-lysyl(4)-[histone H3] + S-adenosyl-L-homocysteine + H(+). Functionally, histone methyltransferase that catalyzes methyl group transfer from S-adenosyl-L-methionine to the epsilon-amino group of 'Lys-4' of histone H3 (H3K4) via a non-processive mechanism. Part of chromatin remodeling machinery, forms H3K4me1, H3K4me2 and H3K4me3 methylation marks at active chromatin sites where transcription and DNA repair take place. Plays an essential role in regulating the transcriptional programming of multipotent hematopoietic progenitor cells and lymphoid lineage specification during hematopoiesis. The protein is Histone-lysine N-methyltransferase SETD1B (Setd1b) of Mus musculus (Mouse).